Consider the following 1343-residue polypeptide: DNA-directed RNA polymerase subunit beta (1343 aa).

It belongs to the RNA polymerase beta chain family. As to quaternary structure, the RNAP catalytic core consists of 2 alpha, 1 beta, 1 beta' and 1 omega subunit. When a sigma factor is associated with the core the holoenzyme is formed, which can initiate transcription.

The catalysed reaction is RNA(n) + a ribonucleoside 5'-triphosphate = RNA(n+1) + diphosphate. DNA-dependent RNA polymerase catalyzes the transcription of DNA into RNA using the four ribonucleoside triphosphates as substrates. The chain is DNA-directed RNA polymerase subunit beta from Haemophilus influenzae (strain PittEE).